The primary structure comprises 994 residues: Alanine--tRNA ligase, chloroplastic/mitochondrial (994 aa).

Positions 1–29 are disordered; the sequence is MGGLKLPPQTLHGIHGGRRPLTAPSSKPS. The Zn(2+) site is built by His672, His676, Cys774, and His778.

This sequence belongs to the class-II aminoacyl-tRNA synthetase family. In terms of assembly, monomer. Requires Zn(2+) as cofactor.

It localises to the plastid. The protein resides in the chloroplast. The protein localises to the mitochondrion. It carries out the reaction tRNA(Ala) + L-alanine + ATP = L-alanyl-tRNA(Ala) + AMP + diphosphate. Its function is as follows. Catalyzes the attachment of alanine to tRNA(Ala) in a two-step reaction: alanine is first activated by ATP to form Ala-AMP and then transferred to the acceptor end of tRNA(Ala). Also edits incorrectly charged tRNA(Ala) via its editing domain. The protein is Alanine--tRNA ligase, chloroplastic/mitochondrial of Populus trichocarpa (Western balsam poplar).